The following is a 1520-amino-acid chain: DNA topoisomerase 2 top-2 (1520 aa).

Residues 1–10 show a composition bias toward acidic residues; that stretch reads MSDSDSEFSI. Positions 1–40 are disordered; the sequence is MSDSDSEFSIEDSPKKKTAPKKEKASPKKKKDDANESMVM. Residues 12 to 34 are compositionally biased toward basic and acidic residues; it reads DSPKKKTAPKKEKASPKKKKDDA. ATP-binding positions include Asn-126, Asn-155, 183-185, 196-203, and 411-413; these read SSN, GRNGYGAK, and QTK. The 118-residue stretch at 490 to 607 folds into the Toprim domain; sequence CTLILTEGDS…SLIQRNFVEE (118 aa). Mg(2+)-binding residues include Glu-496, Asp-576, and Asp-578. Positions 750 to 1219 constitute a Topo IIA-type catalytic domain; that stretch reads IPCLVDGFKP…TWQDLWHEDL (470 aa). Tyr-840 acts as the O-(5'-phospho-DNA)-tyrosine intermediate in catalysis. The segment at 1249–1520 is disordered; that stretch reads AADAKTGRGP…RGRVVDSDSD (272 aa). Residues 1283–1320 are compositionally biased toward basic and acidic residues; that stretch reads TKAKYEKMSQPKKERVKKEPKEPKEPKKVKKEGQDIKK. The segment covering 1342–1364 has biased composition (acidic residues); the sequence is MSEESDVEFDEGIDFDSDDDGVE.

The protein belongs to the type II topoisomerase family. In terms of assembly, homodimer. Interacts with nmad-1; the interaction is required for localization of top-2 to DNA. Interacts with gcna-1; this interaction allows the resolution of topoisomerase 2 DNA-protein cross-links. Mg(2+) serves as cofactor. It depends on Mn(2+) as a cofactor. Requires Ca(2+) as cofactor. In terms of tissue distribution, expressed in the hermaphrodite and male germline.

It is found in the nucleus. It localises to the nucleoplasm. The protein resides in the chromosome. Its subcellular location is the cytoplasm. The protein localises to the cytoskeleton. It is found in the spindle. It carries out the reaction ATP-dependent breakage, passage and rejoining of double-stranded DNA.. Functionally, control of topological states of DNA by transient breakage and subsequent rejoining of DNA strands. Topoisomerase II makes double-strand breaks. Essential during mitosis in the adult germline and during embryogenesis for proper segregation of daughter chromosomes. Required for centromere resolution during mitosis. Required for chromosome segregation in anaphase of meiosis I during spermatogenesis. Promotes cleavage furrow stability during cytokinesis upon the presence of chromatin obstructions. Promotes DNA break formation upon zygotic genome activation in the Z2 and Z3 primordial germ cells in L1 larvae, thereby activating a checkpoint response. Essential for embryogenesis. The polypeptide is DNA topoisomerase 2 top-2 (Caenorhabditis elegans).